The following is a 227-amino-acid chain: UPF0173 metal-dependent hydrolase BCB4264_A4722 (227 aa).

This sequence belongs to the UPF0173 family.

This chain is UPF0173 metal-dependent hydrolase BCB4264_A4722, found in Bacillus cereus (strain B4264).